Here is a 342-residue protein sequence, read N- to C-terminus: Holliday junction branch migration complex subunit RuvB (342 aa).

The interval 1 to 179 is large ATPase domain (RuvB-L); that stretch reads MTNILSPEKS…FGIPMRLNFY (179 aa). ATP contacts are provided by residues isoleucine 18, arginine 19, glycine 60, lysine 63, threonine 64, threonine 65, 126-128, arginine 169, tyrosine 179, and arginine 216; that span reads EDF. Threonine 64 is a binding site for Mg(2+). The segment at 180–250 is small ATPAse domain (RuvB-S); that stretch reads NTGELKKVLN…ISDFGLNRLE (71 aa). The segment at 253 to 342 is head domain (RuvB-H); it reads RIGLDSNDYR…HQFNIFNENE (90 aa). Residues arginine 289, arginine 308, and arginine 313 each coordinate DNA.

This sequence belongs to the RuvB family. Homohexamer. Forms an RuvA(8)-RuvB(12)-Holliday junction (HJ) complex. HJ DNA is sandwiched between 2 RuvA tetramers; dsDNA enters through RuvA and exits via RuvB. An RuvB hexamer assembles on each DNA strand where it exits the tetramer. Each RuvB hexamer is contacted by two RuvA subunits (via domain III) on 2 adjacent RuvB subunits; this complex drives branch migration. In the full resolvosome a probable DNA-RuvA(4)-RuvB(12)-RuvC(2) complex forms which resolves the HJ.

The protein resides in the cytoplasm. The enzyme catalyses ATP + H2O = ADP + phosphate + H(+). The RuvA-RuvB-RuvC complex processes Holliday junction (HJ) DNA during genetic recombination and DNA repair, while the RuvA-RuvB complex plays an important role in the rescue of blocked DNA replication forks via replication fork reversal (RFR). RuvA specifically binds to HJ cruciform DNA, conferring on it an open structure. The RuvB hexamer acts as an ATP-dependent pump, pulling dsDNA into and through the RuvAB complex. RuvB forms 2 homohexamers on either side of HJ DNA bound by 1 or 2 RuvA tetramers; 4 subunits per hexamer contact DNA at a time. Coordinated motions by a converter formed by DNA-disengaged RuvB subunits stimulates ATP hydrolysis and nucleotide exchange. Immobilization of the converter enables RuvB to convert the ATP-contained energy into a lever motion, pulling 2 nucleotides of DNA out of the RuvA tetramer per ATP hydrolyzed, thus driving DNA branch migration. The RuvB motors rotate together with the DNA substrate, which together with the progressing nucleotide cycle form the mechanistic basis for DNA recombination by continuous HJ branch migration. Branch migration allows RuvC to scan DNA until it finds its consensus sequence, where it cleaves and resolves cruciform DNA. This chain is Holliday junction branch migration complex subunit RuvB, found in Rickettsia conorii (strain ATCC VR-613 / Malish 7).